A 506-amino-acid polypeptide reads, in one-letter code: Dolabradiene monooxygenase (506 aa).

Residues 5 to 25 (VLLAVAMVALIAVLSKLKSLL) form a helical membrane-spanning segment. Cys443 provides a ligand contact to heme.

The protein belongs to the cytochrome P450 family. It depends on heme as a cofactor.

Its subcellular location is the membrane. The enzyme catalyses dolabradiene + reduced [NADPH--hemoprotein reductase] + O2 = 15,16-epoxydolabrene + oxidized [NADPH--hemoprotein reductase] + H2O + H(+). It carries out the reaction 15,16-epoxydolabrene + reduced [NADPH--hemoprotein reductase] + O2 = 3beta-hydroxy-15,16-epoxydolabrene + oxidized [NADPH--hemoprotein reductase] + H2O + H(+). Functionally, involved in the production of antifungal dolabralexin phytoalexins in response to biotic and abiotic stresses. Catalyzes the epoxidation of dolabradiene at C-16, followed by hydroxylation at C-3, to yield the epoxides 15,16-epoxydolabrene (epoxydolabrene) and 3b-hydroxy-15,16-epoxydolabrene (epoxydolabranol). The chain is Dolabradiene monooxygenase from Zea mays (Maize).